The sequence spans 331 residues: Probable tRNA pseudouridine synthase B (331 aa).

Asp-66 functions as the Nucleophile in the catalytic mechanism. The 75-residue stretch at 233–307 (INKIIVKDSA…NEEDNREKYK (75 aa)) folds into the PUA domain.

It belongs to the pseudouridine synthase TruB family. Type 2 subfamily.

It carries out the reaction uridine(55) in tRNA = pseudouridine(55) in tRNA. In terms of biological role, could be responsible for synthesis of pseudouridine from uracil-55 in the psi GC loop of transfer RNAs. The sequence is that of Probable tRNA pseudouridine synthase B from Methanococcus aeolicus (strain ATCC BAA-1280 / DSM 17508 / OCM 812 / Nankai-3).